Reading from the N-terminus, the 429-residue chain is Proton/sodium-glutamate symport protein (429 aa).

Residues 1 to 5 (MKRIK) lie on the Cytoplasmic side of the membrane. Residues 6-26 (FGLATQIFVGLILGVIVGVIW) form a helical membrane-spanning segment. Residues 27–45 (YGNPALPTYLQPIGDLFLR) are Extracellular-facing. The helical transmembrane segment at 46-66 (LIKMIVIPIVVSSLIIGVAGA) threads the bilayer. Residues 67-79 (GNGKQVGKLGFRT) are Cytoplasmic-facing. Residues 80 to 100 (ILYFEIITTFAIILGLALANI) form a helical membrane-spanning segment. Residues 101–150 (FHPGTGVNIHEAQKSDISQYVETEKEQSNKSVAETFLHIVPTNFFQSLVE) are Extracellular-facing. Residues 151–171 (GDLLAIICFTVLFALGISAIG) traverse the membrane as a helical segment. Residues 172–190 (ERGKPVLAFFEGVSHAMFH) lie on the Cytoplasmic side of the membrane. Residues 191–211 (VVNLVMKVAPFGVFALIGVTV) traverse the membrane as a helical segment. At 212 to 224 (SKFGLGSLISLGK) the chain is on the extracellular side. Residues 225–245 (LVGLVYVALAFFLIVIFGIVA) form a helical membrane-spanning segment. Lys246 is a topological domain (cytoplasmic). The helical transmembrane segment at 247–267 (IAGISIFKFLAYMKDEILLAF) threads the bilayer. Topologically, residues 268 to 290 (STSSSETVLPRIMEKMEKIGCPK) are extracellular. A helical membrane pass occupies residues 291 to 311 (GIVSFVIPIGYTFNLDGSVLY). The Cytoplasmic segment spans residues 312 to 321 (QSIAALFLAQ). Residues 322–342 (VYGIDLTIWHQITLVLVLMVT) form a helical membrane-spanning segment. The Extracellular segment spans residues 343–353 (SKGMAAVPGTS). Residues 354–374 (FVVLLATLGTIGVPAEGLAFI) traverse the membrane as a helical segment. Residues 375 to 429 (AGVDRIMDMARTVVNLTGNALAAVVMSKWEGMFNPAKAETVMSQSKTEQNATISG) are Cytoplasmic-facing.

The protein belongs to the dicarboxylate/amino acid:cation symporter (DAACS) (TC 2.A.23) family. As to quaternary structure, homotrimer. Interacts with FloT.

It localises to the cell membrane. Its subcellular location is the membrane raft. Functionally, this carrier protein is part of the Na(+)-dependent, binding-protein-independent glutamate-aspartate transport system. This chain is Proton/sodium-glutamate symport protein (gltT), found in Bacillus subtilis (strain 168).